Consider the following 176-residue polypeptide: Ribosome maturation factor RimM (176 aa).

One can recognise a PRC barrel domain in the interval lysine 100 to leucine 173.

It belongs to the RimM family. In terms of assembly, binds ribosomal protein uS19.

The protein localises to the cytoplasm. Its function is as follows. An accessory protein needed during the final step in the assembly of 30S ribosomal subunit, possibly for assembly of the head region. Essential for efficient processing of 16S rRNA. May be needed both before and after RbfA during the maturation of 16S rRNA. It has affinity for free ribosomal 30S subunits but not for 70S ribosomes. The chain is Ribosome maturation factor RimM from Prochlorococcus marinus (strain NATL1A).